A 550-amino-acid chain; its full sequence is Dihydroxy-acid dehydratase (550 aa).

Residue Asp81 coordinates Mg(2+). Residue Cys122 coordinates [2Fe-2S] cluster. Mg(2+) contacts are provided by Asp123 and Lys124. Residue Lys124 is modified to N6-carboxylysine. Residue Cys194 coordinates [2Fe-2S] cluster. Glu442 lines the Mg(2+) pocket. Ser467 (proton acceptor) is an active-site residue.

Belongs to the IlvD/Edd family. In terms of assembly, homodimer. The cofactor is [2Fe-2S] cluster. It depends on Mg(2+) as a cofactor.

The enzyme catalyses (2R)-2,3-dihydroxy-3-methylbutanoate = 3-methyl-2-oxobutanoate + H2O. It catalyses the reaction (2R,3R)-2,3-dihydroxy-3-methylpentanoate = (S)-3-methyl-2-oxopentanoate + H2O. It participates in amino-acid biosynthesis; L-isoleucine biosynthesis; L-isoleucine from 2-oxobutanoate: step 3/4. It functions in the pathway amino-acid biosynthesis; L-valine biosynthesis; L-valine from pyruvate: step 3/4. In terms of biological role, functions in the biosynthesis of branched-chain amino acids. Catalyzes the dehydration of (2R,3R)-2,3-dihydroxy-3-methylpentanoate (2,3-dihydroxy-3-methylvalerate) into 2-oxo-3-methylpentanoate (2-oxo-3-methylvalerate) and of (2R)-2,3-dihydroxy-3-methylbutanoate (2,3-dihydroxyisovalerate) into 2-oxo-3-methylbutanoate (2-oxoisovalerate), the penultimate precursor to L-isoleucine and L-valine, respectively. The chain is Dihydroxy-acid dehydratase from Methanoregula boonei (strain DSM 21154 / JCM 14090 / 6A8).